The primary structure comprises 388 residues: Omega-hydroxy-beta-dihydromenaquinone-9 sulfotransferase Stf3 (388 aa).

The protein belongs to the Stf3 family.

The enzyme catalyses omega-hydroxy-beta-dihydromenaquinone-9 + 3'-phosphoadenylyl sulfate = omega-sulfo-beta-dihydromenaquinone-9 + adenosine 3',5'-bisphosphate + H(+). Functionally, involved in the biosynthesis of sulfomenaquinone (SMK, initially named S881 on the basis of its mass), which is localized in the outer envelope of M.bovis and negatively regulates its virulence. Catalyzes the transfer of a sulfonate group from 3'-phosphoadenosine-5'-phosphosulfate (PAPS) to omega-hydroxy-beta-dihydromenaquinone-9, generating omega-sulfo-beta-dihydromenaquinone-9 (sulfomenaquinone). The sequence is that of Omega-hydroxy-beta-dihydromenaquinone-9 sulfotransferase Stf3 from Mycobacterium bovis (strain ATCC BAA-935 / AF2122/97).